Here is a 136-residue protein sequence, read N- to C-terminus: Transcription antitermination protein NusB (136 aa).

It belongs to the NusB family.

Functionally, involved in transcription antitermination. Required for transcription of ribosomal RNA (rRNA) genes. Binds specifically to the boxA antiterminator sequence of the ribosomal RNA (rrn) operons. This is Transcription antitermination protein NusB from Salinispora arenicola (strain CNS-205).